The sequence spans 87 residues: Defensin-like protein 81 (87 aa).

The N-terminal stretch at 1-27 is a signal peptide; that stretch reads MTIKKFLPLLLSSLMVYSLILLPIISG. Intrachain disulfides connect C33/C69, C37/C57, C43/C67, and C47/C68.

This sequence belongs to the DEFL family.

The protein resides in the secreted. In Arabidopsis thaliana (Mouse-ear cress), this protein is Defensin-like protein 81.